A 233-amino-acid chain; its full sequence is Proteasome subunit alpha (233 aa).

Belongs to the peptidase T1A family. As to quaternary structure, the 20S proteasome core is composed of 14 alpha and 14 beta subunits that assemble into four stacked heptameric rings, resulting in a barrel-shaped structure. The two inner rings, each composed of seven catalytic beta subunits, are sandwiched by two outer rings, each composed of seven alpha subunits. The catalytic chamber with the active sites is on the inside of the barrel. Has a gated structure, the ends of the cylinder being occluded by the N-termini of the alpha-subunits. Is capped at one or both ends by the proteasome regulatory ATPase, PAN. In terms of processing, the N-terminus is blocked.

The protein localises to the cytoplasm. Its activity is regulated as follows. The formation of the proteasomal ATPase PAN-20S proteasome complex, via the docking of the C-termini of PAN into the intersubunit pockets in the alpha-rings, triggers opening of the gate for substrate entry. Interconversion between the open-gate and close-gate conformations leads to a dynamic regulation of the 20S proteasome proteolysis activity. Functionally, component of the proteasome core, a large protease complex with broad specificity involved in protein degradation. The T.acidophilum proteasome is able to cleave oligopeptides after Tyr, Leu, Phe, and to a lesser extent after Glu and Arg. Thus, displays chymotrypsin-like activity and low level of caspase-like and trypsin-like activities. This chain is Proteasome subunit alpha, found in Thermoplasma acidophilum (strain ATCC 25905 / DSM 1728 / JCM 9062 / NBRC 15155 / AMRC-C165).